The following is a 234-amino-acid chain: Ubiquitin domain-containing protein 2 (234 aa).

The segment at 1–46 (MGGCVGAQHDSSGSLNENSDGTGVALGRNQPLKKEKPKWKSDYPMT) is disordered. A compositionally biased stretch (polar residues) spans 9–21 (HDSSGSLNENSDG). A compositionally biased stretch (basic and acidic residues) spans 32-41 (LKKEKPKWKS). The Ubiquitin-like domain occupies 152 to 227 (SQLRLRLSTG…VQVIVSQPVQ (76 aa)).

It localises to the cytoplasm. The chain is Ubiquitin domain-containing protein 2 (Ubtd2) from Mus musculus (Mouse).